The primary structure comprises 372 residues: MKNNYTSLKSPLDEEDELKTDHEIDLEKGLLPEYNSEEEGTLPLYSDISKLANPVPEDSSTGPTEIANPNVERRQEFKDSHPNIYFLLRLLISVLAVSVVFFTAWVCVNPLEKSIFGKVAFSVTIGITCPILFIATFCFFETWTQAVAQCIKVTVIFLAQCVKVTVIFLAQCVKVTAVFLAKCVKVIAVGLYNSKKDLVVTIWLAWVVICFILFGCVKDGRLNLNKALICSTCSISAALFFILLLVCIPIWTLKHMLFGLFQVLGVQSCVVIVTKGLMYLFDKHIDATGYEIEASSLFVIGNFLFFYEMECPGALKRMPKFIRNGIASFLEGIGNAFGGIGNAIGRIGNAFRGANDNNNNIPLEETEAESEV.

The next 6 membrane-spanning stretches (helical) occupy residues 86 to 106 (FLLR…TAWV), 120 to 140 (AFSV…FCFF), 153 to 173 (VTVI…AQCV), 197 to 217 (DLVV…FGCV), 233 to 253 (CSIS…IWTL), and 257 to 277 (LFGL…TKGL).

The protein belongs to the WTF family. In terms of assembly, homomer. Interacts with other proteins that exhibit high sequence similarity.

The protein resides in the spore membrane. The protein localises to the vacuole membrane. Acts as a suppressor component of the dual wtf meiotic drive system, and can suppress but not confer meiotic drive by compatible poisons. Wtf meiotic drive systems promote unequal transmission of alleles from the parental zygote to progeny spores by encoding a poison and an antidote from the same locus; the poison is trans-acting and forms toxic aggregates in all spores within an ascus, wherease the antidote is spore-specific and targets aggregates for degradation by the vacuole. Meiotic drive by wtf systems therefore lead to poisoning of all progeny that do not inherit the dual poison/antidote allele, or express a compatible antidote. This is Meiotic drive suppressor wtf18 from Schizosaccharomyces pombe (strain 972 / ATCC 24843) (Fission yeast).